The chain runs to 561 residues: uncharacterized protein (561 aa).

Disordered stretches follow at residues 369-390 and 429-515; these read SVPENGKPNMGRIPSAPSLSKG and EGLG…GESE. Ser-383 is modified (phosphoserine). The segment covering 465–503 has biased composition (polar residues); sequence NISPESSRFGTPSDPNSSSQSLGNEVLSRPNSNSNSAES.

This is an uncharacterized protein from Schizosaccharomyces pombe (strain 972 / ATCC 24843) (Fission yeast).